Consider the following 176-residue polypeptide: uncharacterized protein (176 aa).

This sequence belongs to the mimivirus R160 family.

This is an uncharacterized protein from Acanthamoeba polyphaga mimivirus (APMV).